Here is a 74-residue protein sequence, read N- to C-terminus: Large ribosomal subunit protein bL31 (74 aa).

Zn(2+) is bound by residues C16, C18, C38, and C41.

This sequence belongs to the bacterial ribosomal protein bL31 family. Type A subfamily. As to quaternary structure, part of the 50S ribosomal subunit. Zn(2+) is required as a cofactor.

In terms of biological role, binds the 23S rRNA. The protein is Large ribosomal subunit protein bL31 of Streptomyces griseus subsp. griseus (strain JCM 4626 / CBS 651.72 / NBRC 13350 / KCC S-0626 / ISP 5235).